A 367-amino-acid chain; its full sequence is tRNA-specific 2-thiouridylase MnmA (367 aa).

ATP-binding positions include 12–19 (GMSGGVDS) and M38. Positions 98-100 (NPD) are interaction with target base in tRNA. C103 serves as the catalytic Nucleophile. A disulfide bridge links C103 with C200. G128 serves as a coordination point for ATP. The interval 150 to 152 (KDQ) is interaction with tRNA. Catalysis depends on C200, which acts as the Cysteine persulfide intermediate. Residues 312-313 (RY) form an interaction with tRNA region.

Belongs to the MnmA/TRMU family. In terms of assembly, interacts with TusE.

It localises to the cytoplasm. It carries out the reaction S-sulfanyl-L-cysteinyl-[protein] + uridine(34) in tRNA + AH2 + ATP = 2-thiouridine(34) in tRNA + L-cysteinyl-[protein] + A + AMP + diphosphate + H(+). Functionally, catalyzes the 2-thiolation of uridine at the wobble position (U34) of tRNA(Lys), tRNA(Glu) and tRNA(Gln), leading to the formation of s(2)U34, the first step of tRNA-mnm(5)s(2)U34 synthesis. Sulfur is provided by IscS, via a sulfur-relay system. Binds ATP and its substrate tRNAs. The chain is tRNA-specific 2-thiouridylase MnmA from Serratia proteamaculans (strain 568).